The chain runs to 489 residues: Monocarboxylate transporter 2 (489 aa).

Residues 1-21 (MPSESSVKATAAPPPFPLPPD) lie on the Cytoplasmic side of the membrane. The helical transmembrane segment at 22–42 (GGWGWVVVCASFISIGFSYAF) threads the bilayer. The Extracellular segment spans residues 43–65 (PKAVTVFFNDIKDIFKTTSSQIA). Residues 66 to 86 (WISSIMLAVMYAGGPISSVLV) traverse the membrane as a helical segment. At 87-95 (NNYGSRPVV) the chain is on the cytoplasmic side. The chain crosses the membrane as a helical span at residues 96–116 (IVGGLLCCTGMILASFSSSVI). Over 117–121 (ELYLT) the chain is Extracellular. Residues 122 to 142 (VGFIGGLGLAFNLQPALTIIG) form a helical membrane-spanning segment. Over 143-154 (KYFYRKRPLANG) the chain is Cytoplasmic. The chain crosses the membrane as a helical span at residues 155–175 (FAMAGSPVFLSTLAPFNQFLF). Topologically, residues 176 to 179 (NSYG) are extracellular. Residues 180–200 (WKGSFLILGAIFLHSCVAGCL) form a helical membrane-spanning segment. At 201 to 250 (MRPVGPSPRAAKSKSKVGSRQDSSTKRLSKVSTAEKINRFLDFGLFTHRG) the chain is on the cytoplasmic side. The interval 206–227 (PSPRAAKSKSKVGSRQDSSTKR) is disordered. Residues 251-271 (FLIYLSGNVVLFLGMFAPIIF) traverse the membrane as a helical segment. The Extracellular segment spans residues 272–286 (LAPYAKDKGVDDYNS). A helical transmembrane segment spans residues 287–307 (AFLLSVMAFTDMFARPSVGLI). Residues 308 to 316 (ANTSLIRPR) are Cytoplasmic-facing. Residues 317–337 (IQYLFSVAIMFTGICHLLCPL) form a helical membrane-spanning segment. Over 338 to 342 (AHSYT) the chain is Extracellular. The chain crosses the membrane as a helical span at residues 343–363 (ALVVYVIFFGIGFGSISSLLF). Residues 364–377 (ECLMDQVGASRFSS) are Cytoplasmic-facing. A helical transmembrane segment spans residues 378-398 (AVGLVTIVECCPVLFGPPLAG). Topologically, residues 399 to 410 (KLLDITGQYKYL) are extracellular. A helical membrane pass occupies residues 411-431 (YIASGIVVLSSGIYLLICNAI). The Cytoplasmic portion of the chain corresponds to 432-489 (NYRLLEKERKREKARRKKSASQASKEMEALSRSKQDDVTVKVSNTHNPPSDRDKESSI). The segment at 441–489 (KREKARRKKSASQASKEMEALSRSKQDDVTVKVSNTHNPPSDRDKESSI) is disordered. Composition is skewed to basic and acidic residues over residues 456 to 470 (KEME…DDVT) and 480 to 489 (PSDRDKESSI).

Belongs to the major facilitator superfamily. Monocarboxylate porter (TC 2.A.1.13) family. As to quaternary structure, homodimer. Interacts with GRID2IP. Interacts with EMB; interaction mediates SLC16A7 targeting to the plasma membrane. Interacts with isoform 2 of BSG. Detected in brain and kidney (at protein level).

The protein resides in the cell membrane. It localises to the basolateral cell membrane. Its subcellular location is the cytoplasm. It carries out the reaction 3-methyl-2-oxobutanoate(out) + H(+)(out) = 3-methyl-2-oxobutanoate(in) + H(+)(in). The enzyme catalyses (S)-lactate(in) + H(+)(in) = (S)-lactate(out) + H(+)(out). It catalyses the reaction acetoacetate(out) + H(+)(out) = acetoacetate(in) + H(+)(in). The catalysed reaction is (R)-3-hydroxybutanoate(out) + H(+)(out) = (R)-3-hydroxybutanoate(in) + H(+)(in). It carries out the reaction 4-methyl-2-oxopentanoate(out) + H(+)(out) = 4-methyl-2-oxopentanoate(in) + H(+)(in). The enzyme catalyses pyruvate(out) + H(+)(out) = pyruvate(in) + H(+)(in). It catalyses the reaction (S)-3-hydroxybutanoate(out) + H(+)(out) = (S)-3-hydroxybutanoate(in) + H(+)(in). Its activity is regulated as follows. Transport activity exhibits steep dependence on substrate concentration. Substrate concentration sensitivity of SLC16A7 arises from the strong inter-subunit cooperativity of the SLC16A7 dimer during transport. Inhibited by AR-C155858. In terms of biological role, proton-coupled monocarboxylate symporter. Catalyzes the rapid transport across the plasma membrane of monocarboxylates such as L-lactate, pyruvate and ketone bodies, acetoacetate, beta-hydroxybutyrate and acetate. Dimerization is functionally required and both subunits work cooperatively in transporting substrate. The polypeptide is Monocarboxylate transporter 2 (Slc16a7) (Rattus norvegicus (Rat)).